The following is a 410-amino-acid chain: Segmentation protein fushi tarazu (410 aa).

Disordered stretches follow at residues 71–93 (TQTV…KAED), 138–157 (PAVS…QEYV), and 175–221 (SPQS…SAVS). Over residues 76–85 (PVQPTTPPPK) the composition is skewed to pro residues. Residues 190–199 (TPPPTTPTSL) are compositionally biased toward pro residues. Positions 254-313 (SKRTRQTYTRYQTLELEKEFHFNRYITRRRRIDIANALSLSERQIKIWFQNRRMKSKKDR) form a DNA-binding region, homeobox.

It belongs to the Antp homeobox family. Post-translationally, phosphorylated at as many as 16 sites. Expressed early in development in a striped pattern at the blastoderm stage. Later expressed in a specific subset of neuronal precursor cells, neurons and glia in the developing CNS. Between 5 and 6 hours of development, found in the midline precursor-2 cells in a segmentally repeating pattern. Expression in many other neuronal precursors follows and reaches a second peak of abundance at 9 hours of development. Expressed in the hindgut between 11-15 hours of development.

Its subcellular location is the nucleus. In terms of biological role, may play a role in determining neuronal identity, may be directly involved in specifying identity of individual neurons. Required during embryogenesis for the process of body segmentation. Homeotic protein, required in alternating segment primordia, it specifies the correct number of segments. The protein is Segmentation protein fushi tarazu (ftz) of Drosophila melanogaster (Fruit fly).